Here is a 181-residue protein sequence, read N- to C-terminus: Ribulose bisphosphate carboxylase small subunit, chloroplastic 2 (181 aa).

The transit peptide at 1–57 (MASSVISSAAVATRTNVTQAGSMIAPFTGLKSAATFPVSRKQNLDITSIASNGGRVR) directs the protein to the chloroplast.

It belongs to the RuBisCO small chain family. Heterohexadecamer of 8 large and 8 small subunits.

The protein localises to the plastid. Its subcellular location is the chloroplast. In terms of biological role, ruBisCO catalyzes two reactions: the carboxylation of D-ribulose 1,5-bisphosphate, the primary event in carbon dioxide fixation, as well as the oxidative fragmentation of the pentose substrate. Both reactions occur simultaneously and in competition at the same active site. Although the small subunit is not catalytic it is essential for maximal activity. In Solanum tuberosum (Potato), this protein is Ribulose bisphosphate carboxylase small subunit, chloroplastic 2.